Reading from the N-terminus, the 273-residue chain is Putative pyruvate, phosphate dikinase regulatory protein (273 aa).

Position 153–160 (153–160 (GVSRTSKS)) interacts with ADP.

Belongs to the pyruvate, phosphate/water dikinase regulatory protein family. PDRP subfamily.

It carries out the reaction N(tele)-phospho-L-histidyl/L-threonyl-[pyruvate, phosphate dikinase] + ADP = N(tele)-phospho-L-histidyl/O-phospho-L-threonyl-[pyruvate, phosphate dikinase] + AMP + H(+). The enzyme catalyses N(tele)-phospho-L-histidyl/O-phospho-L-threonyl-[pyruvate, phosphate dikinase] + phosphate + H(+) = N(tele)-phospho-L-histidyl/L-threonyl-[pyruvate, phosphate dikinase] + diphosphate. In terms of biological role, bifunctional serine/threonine kinase and phosphorylase involved in the regulation of the pyruvate, phosphate dikinase (PPDK) by catalyzing its phosphorylation/dephosphorylation. The chain is Putative pyruvate, phosphate dikinase regulatory protein from Ehrlichia chaffeensis (strain ATCC CRL-10679 / Arkansas).